The chain runs to 529 residues: Delayed-rectifier potassium channel regulatory subunit KCNS1 (529 aa).

Residues 1-217 lie on the Cytoplasmic side of the membrane; it reads MLMLLVRGTH…LTMENPGYSL (217 aa). Residues 218–239 traverse the membrane as a helical segment; the sequence is PSKLFSCVSISVVLASIAAMCI. The Extracellular portion of the chain corresponds to 240 to 270; sequence HSLPEYQAREAAAAVAAVAAGRSPEGVRDDP. The chain crosses the membrane as a helical span at residues 271–293; sequence VLRRLEYFCIAWFSFEVSSRLLL. At 294 to 304 the chain is on the cytoplasmic side; sequence APSTRNFFCHP. A helical membrane pass occupies residues 305-322; it reads LNLIDIVSVLPFYLTLLA. Over 323–340 the chain is Extracellular; that stretch reads GVALGDQGGTGGKELGHL. Residues 341-361 traverse the membrane as a helical; Voltage-sensor segment; the sequence is GKVVQVFRLMRIFRVLKLARH. At 362–376 the chain is on the cytoplasmic side; that stretch reads STGLRSLGATLKHSY. The chain crosses the membrane as a helical span at residues 377–398; sequence REVGILLLYLAVGVSVFSGVAY. The Extracellular portion of the chain corresponds to 399-411; sequence TAEKEEDVGFNTI. An intramembrane region (helical) is located at residues 412–423; that stretch reads PACWWWGTVSMT. The Selectivity filter motif lies at 424–429; it reads TVGYGD. Residues 424–431 lie within the membrane without spanning it; the sequence is TVGYGDVV. Topologically, residues 432–438 are extracellular; sequence PVTVAGK. A helical transmembrane segment spans residues 439 to 467; that stretch reads LAASGCILGGILVVALPITIIFNKFSHFY. Over 468–529 the chain is Cytoplasmic; it reads RRQKALEAAV…PSEPPHPQMY (62 aa). Residues 496–529 are disordered; sequence SEASLETSRETSQEGRSADLETQAPSEPPHPQMY. Positions 502 to 514 are enriched in basic and acidic residues; it reads TSRETSQEGRSAD.

This sequence belongs to the potassium channel family. S (TC 1.A.1.2) subfamily. Kv9.1/KCNS1 sub-subfamily. In terms of assembly, heterotetramer with KCNB1. Heterotetramer with KCNB2. Does not form homomultimers.

The protein localises to the cell membrane. Functionally, potassium channel regulatory subunit that modulate the delayed rectifier voltage-gated potassium channel activity of KCNB1 and KCNB2 by altering their kinetics, expression levels, and shifting the half-inactivation potential to more polarized values. While it does not form functional channels on its own, it can form functional heterotetrameric channels with KCNB1 and KCNB2. Each regulatory subunit has unique regulatory properties that can lead to extensive inhibition, significant changes in kinetics, and/or substantial shifts in the voltage dependencies of the inactivation process. This chain is Delayed-rectifier potassium channel regulatory subunit KCNS1, found in Papio anubis (Olive baboon).